The chain runs to 324 residues: HPr kinase/phosphorylase (324 aa).

Catalysis depends on residues histidine 146 and lysine 167. 161-168 (GDSGLGKS) serves as a coordination point for ATP. Mg(2+) is bound at residue serine 168. The active-site Proton acceptor; for phosphorylation activity. Proton donor; for dephosphorylation activity is aspartate 185. The segment at 209–218 (LEVRGLGLLD) is important for the catalytic mechanism of both phosphorylation and dephosphorylation. Glutamate 210 contributes to the Mg(2+) binding site. The active site involves arginine 250. Residues 271-276 (QVAAGR) are important for the catalytic mechanism of dephosphorylation.

Belongs to the HPrK/P family. Homohexamer. The cofactor is Mg(2+).

The enzyme catalyses [HPr protein]-L-serine + ATP = [HPr protein]-O-phospho-L-serine + ADP + H(+). The catalysed reaction is [HPr protein]-O-phospho-L-serine + phosphate + H(+) = [HPr protein]-L-serine + diphosphate. Its function is as follows. Catalyzes the ATP- as well as the pyrophosphate-dependent phosphorylation of a specific serine residue in HPr, a phosphocarrier protein of the phosphoenolpyruvate-dependent sugar phosphotransferase system (PTS). HprK/P also catalyzes the pyrophosphate-producing, inorganic phosphate-dependent dephosphorylation (phosphorolysis) of seryl-phosphorylated HPr (P-Ser-HPr). This chain is HPr kinase/phosphorylase, found in Ralstonia pickettii (strain 12J).